A 160-amino-acid chain; its full sequence is Transcription elongation factor GreA (160 aa).

The stretch at 49 to 75 forms a coiled coil; the sequence is SEYDEAKNDQAFTEGKILQLENKLKNA.

This sequence belongs to the GreA/GreB family.

Functionally, necessary for efficient RNA polymerase transcription elongation past template-encoded arresting sites. The arresting sites in DNA have the property of trapping a certain fraction of elongating RNA polymerases that pass through, resulting in locked ternary complexes. Cleavage of the nascent transcript by cleavage factors such as GreA or GreB allows the resumption of elongation from the new 3'terminus. GreA releases sequences of 2 to 3 nucleotides. In Clostridium botulinum (strain Alaska E43 / Type E3), this protein is Transcription elongation factor GreA.